Here is a 355-residue protein sequence, read N- to C-terminus: 12-oxophytodienoate reductase-like protein (355 aa).

Residues 30–32, A63, and Q105 contribute to the FMN site; that span reads ALT. Position 175–178 (175–178) interacts with substrate; it reads NASS. Y181 functions as the Proton donor in the catalytic mechanism. Residue R265 coordinates substrate. FMN is bound by residues G288 and 309–310; that span reads GR.

It belongs to the NADH:flavin oxidoreductase/NADH oxidase family. FMN serves as cofactor. As to expression, weakly expressed in flowers and roots.

It localises to the cytoplasm. Functionally, may be involved in the biosynthesis or metabolism of oxylipin signaling molecules. The chain is 12-oxophytodienoate reductase-like protein (OPR2) from Solanum lycopersicum (Tomato).